The chain runs to 338 residues: Peptidyl-prolyl cis-trans isomerase cyp11 (338 aa).

Residues 7–172 (FFDIDVDGNR…HNVMIANCGE (166 aa)) form the PPIase cyclophilin-type domain. Residues 186–338 (ASAVSDESED…RGRFKYRPTY (153 aa)) form a disordered region. Residues 208–218 (DDSSSDEDSEE) show a composition bias toward acidic residues. Residues 223–242 (RTKKKRSRKHSKKDKKKKKR) are compositionally biased toward basic residues. Over residues 243–309 (ESSNRKRSPE…PEKRSSERRV (67 aa)) the composition is skewed to basic and acidic residues. Residues 329 to 338 (RGRFKYRPTY) show a composition bias toward basic residues.

It belongs to the cyclophilin-type PPIase family.

The enzyme catalyses [protein]-peptidylproline (omega=180) = [protein]-peptidylproline (omega=0). PPIases accelerate the folding of proteins. It catalyzes the cis-trans isomerization of proline imidic peptide bonds in oligopeptides. This Rhizopus delemar (strain RA 99-880 / ATCC MYA-4621 / FGSC 9543 / NRRL 43880) (Mucormycosis agent) protein is Peptidyl-prolyl cis-trans isomerase cyp11 (cyp11).